A 349-amino-acid chain; its full sequence is Flap endonuclease 1-B (349 aa).

Positions 1–105 (MGIKGLTKLL…GELAKRLARR (105 aa)) are N-domain. D34 lines the Mg(2+) pocket. R71 serves as a coordination point for DNA. The Mg(2+) site is built by D87, E159, E161, D180, and D182. Positions 123–254 (DMEKYSKRTV…QTALKLIRQH (132 aa)) are I-domain. DNA is bound at residue E159. G232 and D234 together coordinate DNA. Residue D234 coordinates Mg(2+).

Belongs to the XPG/RAD2 endonuclease family. FEN1 subfamily. In terms of assembly, interacts with PCNA. Three molecules of FEN1 bind to one PCNA trimer with each molecule binding to one PCNA monomer. PCNA stimulates the nuclease activity without altering cleavage specificity. Mg(2+) is required as a cofactor. Post-translationally, phosphorylated. Phosphorylation upon DNA damage induces relocalization to the nuclear plasma.

The protein localises to the nucleus. The protein resides in the nucleolus. It is found in the nucleoplasm. It localises to the mitochondrion. Structure-specific nuclease with 5'-flap endonuclease and 5'-3' exonuclease activities involved in DNA replication and repair. During DNA replication, cleaves the 5'-overhanging flap structure that is generated by displacement synthesis when DNA polymerase encounters the 5'-end of a downstream Okazaki fragment. It enters the flap from the 5'-end and then tracks to cleave the flap base, leaving a nick for ligation. Also involved in the long patch base excision repair (LP-BER) pathway, by cleaving within the apurinic/apyrimidinic (AP) site-terminated flap. Acts as a genome stabilization factor that prevents flaps from equilibrating into structures that lead to duplications and deletions. Also possesses 5'-3' exonuclease activity on nicked or gapped double-stranded DNA, and exhibits RNase H activity. Also involved in replication and repair of rDNA and in repairing mitochondrial DNA. This is Flap endonuclease 1-B from Physcomitrium patens (Spreading-leaved earth moss).